Reading from the N-terminus, the 84-residue chain is U21-theraphotoxin-Cg1a 3 (84 aa).

The signal sequence occupies residues methionine 1–alanine 21. A propeptide spanning residues glutamate 22 to arginine 47 is cleaved from the precursor. 3 disulfide bridges follow: cysteine 49-cysteine 63, cysteine 56-cysteine 68, and cysteine 62-cysteine 76. Valine 82 is subject to Valine amide.

This sequence belongs to the neurotoxin 10 (Hwtx-1) family. 05 (F4a) subfamily. As to expression, expressed by the venom gland.

It is found in the secreted. Its function is as follows. Probable ion channel inhibitor. This chain is U21-theraphotoxin-Cg1a 3, found in Chilobrachys guangxiensis (Chinese earth tiger tarantula).